Here is a 363-residue protein sequence, read N- to C-terminus: U-box domain-containing protein 62 (363 aa).

Residues 74 to 117 are disordered; sequence KPIIGNPNDSGGSDGEDDVDVEEEDEDDDLDGNEGDIGMNKDAG. Positions 87–107 are enriched in acidic residues; the sequence is DGEDDVDVEEEDEDDDLDGNE. Residues 181–253 form the U-box domain; sequence SLRTILSDPT…QAFCREENSQ (73 aa). Residues 343–363 form a disordered region; that stretch reads AKAPEDPSAKATPNKMVSNWL.

The enzyme catalyses S-ubiquitinyl-[E2 ubiquitin-conjugating enzyme]-L-cysteine + [acceptor protein]-L-lysine = [E2 ubiquitin-conjugating enzyme]-L-cysteine + N(6)-ubiquitinyl-[acceptor protein]-L-lysine.. It functions in the pathway protein modification; protein ubiquitination. In terms of biological role, functions as an E3 ubiquitin ligase. The polypeptide is U-box domain-containing protein 62 (PUB62) (Arabidopsis thaliana (Mouse-ear cress)).